A 215-amino-acid polypeptide reads, in one-letter code: Probable phosphoglycerate mutase GpmB (215 aa).

Substrate-binding positions include 8–15, 21–22, R58, 82–85, 104–105, and 151–152; these read RHGETQWN, QG, ELDM, RR, and GI. The active-site Tele-phosphohistidine intermediate is H9. Residue E82 is the Proton donor/acceptor of the active site.

This sequence belongs to the phosphoglycerate mutase family. GpmB subfamily.

It catalyses the reaction (2R)-2-phosphoglycerate = (2R)-3-phosphoglycerate. It participates in carbohydrate degradation; glycolysis; pyruvate from D-glyceraldehyde 3-phosphate: step 3/5. The polypeptide is Probable phosphoglycerate mutase GpmB (Enterobacter sp. (strain 638)).